A 189-amino-acid polypeptide reads, in one-letter code: Potassium-transporting ATPase KdpC subunit (189 aa).

The helical transmembrane segment at 6–26 threads the bilayer; the sequence is PAIMMVLVFTIICGGIYPAVV.

Belongs to the KdpC family. In terms of assembly, the system is composed of three essential subunits: KdpA, KdpB and KdpC.

The protein resides in the cell inner membrane. Functionally, part of the high-affinity ATP-driven potassium transport (or Kdp) system, which catalyzes the hydrolysis of ATP coupled with the electrogenic transport of potassium into the cytoplasm. This subunit acts as a catalytic chaperone that increases the ATP-binding affinity of the ATP-hydrolyzing subunit KdpB by the formation of a transient KdpB/KdpC/ATP ternary complex. This chain is Potassium-transporting ATPase KdpC subunit, found in Geobacter metallireducens (strain ATCC 53774 / DSM 7210 / GS-15).